The primary structure comprises 456 residues: Bifunctional protein GlmU (456 aa).

Positions methionine 1 to arginine 229 are pyrophosphorylase. Residues leucine 11–glycine 14, lysine 25, glutamine 76, glycine 81–threonine 82, tyrosine 103–aspartate 105, glycine 140, glutamate 154, asparagine 169, and asparagine 227 each bind UDP-N-acetyl-alpha-D-glucosamine. Residue aspartate 105 participates in Mg(2+) binding. Asparagine 227 is a binding site for Mg(2+). Residues leucine 230–serine 250 are linker. The interval glycine 251 to lysine 456 is N-acetyltransferase. Arginine 333 and lysine 351 together coordinate UDP-N-acetyl-alpha-D-glucosamine. Residue histidine 363 is the Proton acceptor of the active site. UDP-N-acetyl-alpha-D-glucosamine is bound by residues tyrosine 366 and asparagine 377. Residues alanine 380, asparagine 386–tyrosine 387, serine 405, alanine 423, and arginine 440 contribute to the acetyl-CoA site.

In the N-terminal section; belongs to the N-acetylglucosamine-1-phosphate uridyltransferase family. It in the C-terminal section; belongs to the transferase hexapeptide repeat family. In terms of assembly, homotrimer. Mg(2+) serves as cofactor.

It localises to the cytoplasm. The catalysed reaction is alpha-D-glucosamine 1-phosphate + acetyl-CoA = N-acetyl-alpha-D-glucosamine 1-phosphate + CoA + H(+). It carries out the reaction N-acetyl-alpha-D-glucosamine 1-phosphate + UTP + H(+) = UDP-N-acetyl-alpha-D-glucosamine + diphosphate. It participates in nucleotide-sugar biosynthesis; UDP-N-acetyl-alpha-D-glucosamine biosynthesis; N-acetyl-alpha-D-glucosamine 1-phosphate from alpha-D-glucosamine 6-phosphate (route II): step 2/2. It functions in the pathway nucleotide-sugar biosynthesis; UDP-N-acetyl-alpha-D-glucosamine biosynthesis; UDP-N-acetyl-alpha-D-glucosamine from N-acetyl-alpha-D-glucosamine 1-phosphate: step 1/1. Its pathway is bacterial outer membrane biogenesis; LPS lipid A biosynthesis. In terms of biological role, catalyzes the last two sequential reactions in the de novo biosynthetic pathway for UDP-N-acetylglucosamine (UDP-GlcNAc). The C-terminal domain catalyzes the transfer of acetyl group from acetyl coenzyme A to glucosamine-1-phosphate (GlcN-1-P) to produce N-acetylglucosamine-1-phosphate (GlcNAc-1-P), which is converted into UDP-GlcNAc by the transfer of uridine 5-monophosphate (from uridine 5-triphosphate), a reaction catalyzed by the N-terminal domain. The sequence is that of Bifunctional protein GlmU from Salmonella heidelberg (strain SL476).